The primary structure comprises 380 residues: Cytochrome b (380 aa).

The next 4 membrane-spanning stretches (helical) occupy residues 33-53, 77-98, 113-133, and 178-198; these read FGSL…FLAM, WLLR…YLHI, WNIG…GYVL, and FFTF…LHLL. H83 and H97 together coordinate heme b. Heme b contacts are provided by H182 and H196. H201 provides a ligand contact to a ubiquinone. The next 4 helical transmembrane spans lie at 226–246, 288–308, 320–340, and 347–367; these read YKDL…ALLN, LGGV…PTLH, SSQT…WIGG, and FIII…FFIP.

It belongs to the cytochrome b family. The cytochrome bc1 complex contains 3 respiratory subunits (MT-CYB, CYC1 and UQCRFS1), 2 core proteins (UQCRC1 and UQCRC2) and probably 6 low-molecular weight proteins. Heme b serves as cofactor.

It localises to the mitochondrion inner membrane. Functionally, component of the ubiquinol-cytochrome c reductase complex (complex III or cytochrome b-c1 complex) that is part of the mitochondrial respiratory chain. The b-c1 complex mediates electron transfer from ubiquinol to cytochrome c. Contributes to the generation of a proton gradient across the mitochondrial membrane that is then used for ATP synthesis. The protein is Cytochrome b (mt-cyb) of Lepisosteus oculatus (Spotted gar).